Consider the following 116-residue polypeptide: Ly-6/neurotoxin-like protein 1 (116 aa).

An N-terminal signal peptide occupies residues 1–20; the sequence is MTPLLTLFLVALIGLPLAQA. Residues 21-105 form the UPAR/Ly6 domain; that stretch reads LDCHVCAYNG…FAAPATLALA (85 aa). 5 cysteine pairs are disulfide-bonded: Cys-23–Cys-46, Cys-26–Cys-33, Cys-39–Cys-64, Cys-68–Cys-85, and Cys-86–Cys-91. The GPI-anchor amidated asparagine moiety is linked to residue Asn-92. Positions 93–116 are cleaved as a propeptide — removed in mature form; sequence GAGFAAPATLALAPILLATLWGLL.

As to quaternary structure, interacts with nAChRs containing alpha-4:beta-2 (CHRNA4:CHRNB2) and alpha-7 (CHRNA7) subunits. Interacts with CHRNA4 probably in the endoplasmic reticulum prior to nAChR pentameric assembly. Interacts with KCNA2/Potassium voltage-gated channel subfamily A member 2.

The protein localises to the cell membrane. It is found in the cell projection. It localises to the dendrite. The protein resides in the endoplasmic reticulum. Its function is as follows. Acts in different tissues through interaction to nicotinic acetylcholine receptors (nAChRs). The proposed role as modulator of nAChR activity seems to be dependent on the nAChR subtype and stoichiometry, and to involve an effect on nAChR trafficking and its cell surface expression, and on single channel properties of the nAChR inserted in the plasma membrane. Modulates functional properties of nicotinic acetylcholine receptors (nAChRs) to prevent excessive excitation, and hence neurodegeneration. Enhances desensitization by increasing both the rate and extent of desensitization of alpha-4:beta-2-containing nAChRs and slowing recovery from desensitization. Promotes large amplitude ACh-evoked currents through alpha-4:beta-2 nAChRs. Is involved in regulation of the nAChR pentameric assembly in the endoplasmic reticulum. Shifts stoichiometry from high sensitivity alpha-4(2):beta-2(3) to low sensitivity alpha-4(3):beta-2(2) nAChR. In vitro modulates alpha-3:beta-4-containing nAChRs. Reduces cell surface expression of (alpha-3:beta-4)(2):beta-4 and (alpha-3:beta-4)(2):alpha-5 nAChRs suggesting an interaction with nAChR alpha-3(-):(+)beta-4 subunit interfaces and an allosteric mode. Corresponding single channel effects characterized by decreased unitary conductance, altered burst proportions and enhanced desensitization/inactivation seem to depend on nAChR alpha:alpha subunit interfaces and are greater in (alpha-3:beta-2)(2):alpha-3 when compared to (alpha-3:beta-2)(2):alpha-5 nAChRs. Prevents plasticity in the primary visual cortex late in life. This Saimiri boliviensis boliviensis (Bolivian squirrel monkey) protein is Ly-6/neurotoxin-like protein 1.